Here is a 363-residue protein sequence, read N- to C-terminus: Ribonuclease P protein subunit p40 (363 aa).

As to quaternary structure, component of nuclear RNase P and RNase MRP ribonucleoproteins. RNase P consists of a catalytic RNA moiety and about 10 protein subunits; POP1, POP4, POP5, POP7, RPP14, RPP21, RPP25, RPP30, RPP38 and RPP40. Within the RNase P complex, POP1, POP7 and RPP25 form the 'finger' subcomplex, POP5, RPP14, RPP40 and homodimeric RPP30 form the 'palm' subcomplex, and RPP21, POP4 and RPP38 form the 'wrist' subcomplex. All subunits of the RNase P complex interact with the catalytic RNA. Several subunits of RNase P are also part of the RNase MRP complex. RNase MRP consists of a catalytic RNA moiety and about 8 protein subunits; POP1, POP7, RPP25, RPP30, RPP38, RPP40 and possibly also POP4 and POP5.

The protein resides in the nucleus. It is found in the nucleolus. Its function is as follows. Component of ribonuclease P, a ribonucleoprotein complex that generates mature tRNA molecules by cleaving their 5'-ends. Also a component of the MRP ribonuclease complex, which cleaves pre-rRNA sequences. This chain is Ribonuclease P protein subunit p40 (RPP40), found in Homo sapiens (Human).